Consider the following 299-residue polypeptide: Phosphoribosylaminoimidazole-succinocarboxamide synthase (299 aa).

The protein belongs to the SAICAR synthetase family.

The catalysed reaction is 5-amino-1-(5-phospho-D-ribosyl)imidazole-4-carboxylate + L-aspartate + ATP = (2S)-2-[5-amino-1-(5-phospho-beta-D-ribosyl)imidazole-4-carboxamido]succinate + ADP + phosphate + 2 H(+). It participates in purine metabolism; IMP biosynthesis via de novo pathway; 5-amino-1-(5-phospho-D-ribosyl)imidazole-4-carboxamide from 5-amino-1-(5-phospho-D-ribosyl)imidazole-4-carboxylate: step 1/2. This chain is Phosphoribosylaminoimidazole-succinocarboxamide synthase (ade7), found in Schizosaccharomyces pombe (strain 972 / ATCC 24843) (Fission yeast).